The sequence spans 577 residues: F-box-like/WD repeat-containing protein TBL1X (577 aa).

The region spanning Thr55–Gln87 is the LisH domain. One can recognise an F-box-like domain in the interval Gly92–Ala137. Lys153 is modified (N6-acetyllysine). The disordered stretch occupies residues Thr177–Ala202. Phosphoserine is present on Ser183. WD repeat units follow at residues Gly230–Ser269, Pro286–Leu325, Gln327–Gln366, Phe369–Gln409, Gly410–Asp449, Ala452–Thr500, Lys503–Ser542, and Arg544–Arg576. A Glycyl lysine isopeptide (Lys-Gly) (interchain with G-Cter in SUMO2) cross-link involves residue Lys340.

The protein belongs to the WD repeat EBI family. As to quaternary structure, homotetramer; dimer of dimers. Component of the N-Cor repressor complex, at least composed of NCOR1, NCOR2, HDAC3, TBL1X, TBL1R, CORO2A and GPS2. Interacts with GPS2 (when sumoylated); leading to protect GPS2 against degradation by the proteasome. Component of a E3 ubiquitin ligase complex containing UBE2D1, SIAH1, CACYBP/SIP, SKP1, APC and TBL1X. Probably part of other corepressor complexes, that do not contain NCOR1 and NCOR2. Interacts with histones H2B, H3a and H4. Interacts with MECP2; recruits TBL1X to the heterochromatin foci. Interacts with USP44. In terms of tissue distribution, ubiquitous.

The protein resides in the nucleus. Its function is as follows. F-box-like protein involved in the recruitment of the ubiquitin/19S proteasome complex to nuclear receptor-regulated transcription units. Plays an essential role in transcription activation mediated by nuclear receptors. Probably acts as integral component of corepressor complexes that mediates the recruitment of the 19S proteasome complex, leading to the subsequent proteasomal degradation of transcription repressor complexes, thereby allowing cofactor exchange. This chain is F-box-like/WD repeat-containing protein TBL1X (TBL1X), found in Homo sapiens (Human).